Consider the following 155-residue polypeptide: SsrA-binding protein (155 aa).

Positions 127–149 are enriched in basic and acidic residues; it reads KKDYDKRNDMRKKEAKREMERTF. The interval 127–155 is disordered; it reads KKDYDKRNDMRKKEAKREMERTFKSKNQY.

Belongs to the SmpB family.

It localises to the cytoplasm. Required for rescue of stalled ribosomes mediated by trans-translation. Binds to transfer-messenger RNA (tmRNA), required for stable association of tmRNA with ribosomes. tmRNA and SmpB together mimic tRNA shape, replacing the anticodon stem-loop with SmpB. tmRNA is encoded by the ssrA gene; the 2 termini fold to resemble tRNA(Ala) and it encodes a 'tag peptide', a short internal open reading frame. During trans-translation Ala-aminoacylated tmRNA acts like a tRNA, entering the A-site of stalled ribosomes, displacing the stalled mRNA. The ribosome then switches to translate the ORF on the tmRNA; the nascent peptide is terminated with the 'tag peptide' encoded by the tmRNA and targeted for degradation. The ribosome is freed to recommence translation, which seems to be the essential function of trans-translation. This is SsrA-binding protein from Lysinibacillus sphaericus (strain C3-41).